A 396-amino-acid polypeptide reads, in one-letter code: 1-deoxy-D-xylulose 5-phosphate reductoisomerase (396 aa).

Residues Thr13, Gly14, Ser15, Ile16, and Asn127 each coordinate NADPH. Lys128 is a binding site for 1-deoxy-D-xylulose 5-phosphate. Glu129 is an NADPH binding site. Asp153 contacts Mn(2+). Ser154, Glu155, Ser184, and His207 together coordinate 1-deoxy-D-xylulose 5-phosphate. Glu155 contributes to the Mn(2+) binding site. Gly213 is a binding site for NADPH. 1-deoxy-D-xylulose 5-phosphate is bound by residues Ser220, Asn225, Lys226, and Glu229. Glu229 contributes to the Mn(2+) binding site.

This sequence belongs to the DXR family. It depends on Mg(2+) as a cofactor. Mn(2+) serves as cofactor.

The catalysed reaction is 2-C-methyl-D-erythritol 4-phosphate + NADP(+) = 1-deoxy-D-xylulose 5-phosphate + NADPH + H(+). Its pathway is isoprenoid biosynthesis; isopentenyl diphosphate biosynthesis via DXP pathway; isopentenyl diphosphate from 1-deoxy-D-xylulose 5-phosphate: step 1/6. In terms of biological role, catalyzes the NADPH-dependent rearrangement and reduction of 1-deoxy-D-xylulose-5-phosphate (DXP) to 2-C-methyl-D-erythritol 4-phosphate (MEP). The chain is 1-deoxy-D-xylulose 5-phosphate reductoisomerase from Pseudomonas fluorescens (strain Pf0-1).